A 347-amino-acid chain; its full sequence is NADH-ubiquinone oxidoreductase chain 2 (347 aa).

A run of 10 helical transmembrane segments spans residues 4 to 21 (LALI…VIVM), 26 to 44 (WLLV…IPVL), 59 to 79 (YFLT…TNLL), 93 to 115 (LAST…HFWV), 149 to 169 (LNLN…GWGG), 178 to 198 (ILAY…TYNP), 200 to 220 (LTLL…MLFM), 241 to 261 (ATSV…SGFL), 274 to 294 (ESIF…YFYM), and 323 to 343 (TPLL…APIL).

This sequence belongs to the complex I subunit 2 family. Core subunit of respiratory chain NADH dehydrogenase (Complex I) which is composed of 45 different subunits. Interacts with TMEM242.

Its subcellular location is the mitochondrion inner membrane. The enzyme catalyses a ubiquinone + NADH + 5 H(+)(in) = a ubiquinol + NAD(+) + 4 H(+)(out). Functionally, core subunit of the mitochondrial membrane respiratory chain NADH dehydrogenase (Complex I) which catalyzes electron transfer from NADH through the respiratory chain, using ubiquinone as an electron acceptor. Essential for the catalytic activity and assembly of complex I. The chain is NADH-ubiquinone oxidoreductase chain 2 from Cardioderma cor (Heart-nosed bat).